A 445-amino-acid polypeptide reads, in one-letter code: Eukaryotic translation initiation factor 3 subunit E (445 aa).

Residues 230-403 (FFNHVKGRDL…GHVVMGAQPL (174 aa)) form the PCI domain.

It belongs to the eIF-3 subunit E family. As to quaternary structure, component of the eukaryotic translation initiation factor 3 (eIF-3) complex.

The protein resides in the cytoplasm. Functionally, component of the eukaryotic translation initiation factor 3 (eIF-3) complex, which is involved in protein synthesis of a specialized repertoire of mRNAs and, together with other initiation factors, stimulates binding of mRNA and methionyl-tRNAi to the 40S ribosome. The eIF-3 complex specifically targets and initiates translation of a subset of mRNAs involved in cell proliferation. This is Eukaryotic translation initiation factor 3 subunit E (eIF3-S6) from Bombyx mori (Silk moth).